Here is a 305-residue protein sequence, read N- to C-terminus: Ornithine carbamoyltransferase (305 aa).

Residues 48-51 (STRT), arginine 99, and 126-129 (HPCQ) contribute to the carbamoyl phosphate site. Residues asparagine 157, aspartate 222, and 226–227 (SM) contribute to the L-ornithine site. Carbamoyl phosphate contacts are provided by residues 262–263 (CL) and arginine 290.

This sequence belongs to the aspartate/ornithine carbamoyltransferase superfamily. OTCase family.

The protein resides in the cytoplasm. The catalysed reaction is carbamoyl phosphate + L-ornithine = L-citrulline + phosphate + H(+). The protein operates within amino-acid biosynthesis; L-arginine biosynthesis; L-arginine from L-ornithine and carbamoyl phosphate: step 1/3. In terms of biological role, reversibly catalyzes the transfer of the carbamoyl group from carbamoyl phosphate (CP) to the N(epsilon) atom of ornithine (ORN) to produce L-citrulline. This Methanocaldococcus jannaschii (strain ATCC 43067 / DSM 2661 / JAL-1 / JCM 10045 / NBRC 100440) (Methanococcus jannaschii) protein is Ornithine carbamoyltransferase (argF).